Reading from the N-terminus, the 433-residue chain is Glutamate-1-semialdehyde 2,1-aminomutase (433 aa).

Lys272 carries the post-translational modification N6-(pyridoxal phosphate)lysine.

This sequence belongs to the class-III pyridoxal-phosphate-dependent aminotransferase family. HemL subfamily. As to quaternary structure, homodimer. It depends on pyridoxal 5'-phosphate as a cofactor.

It is found in the cytoplasm. It catalyses the reaction (S)-4-amino-5-oxopentanoate = 5-aminolevulinate. It participates in porphyrin-containing compound metabolism; protoporphyrin-IX biosynthesis; 5-aminolevulinate from L-glutamyl-tRNA(Glu): step 2/2. Its pathway is porphyrin-containing compound metabolism; chlorophyll biosynthesis. This chain is Glutamate-1-semialdehyde 2,1-aminomutase, found in Synechococcus sp. (strain WH7803).